The primary structure comprises 338 residues: MKEAFLKACRGIRTDYTPVWFMRQAGRYMPEYQKLRQKYDFLTMCKTPEIAAEVTLQPVKVLGVDAAILFSDILIPLEAMGLKIEFIDDKGPQVLPNIRTVADLEILGELNLEKIGFVFDAIRILINELNVPLIGFAASPFTLATYVIEGGSTKEFVNTKRFMFLEPEGFHKLMSLFTKATQKYLNEQIRAGVHAVQIFDTWAGILSPFDYESFVKPYVKRLIESLKTVPVIYFSSNTAGLINHLKELNADVLSIDWRIDIKDATDLLKNKPLQGNLDPLTLLGSDEELFKRVEKVLIGARGAKSHIFNLGHGVNINTSVDKLKKLVDFVHEFKFMED.

Residues Arg-23–Arg-27, Asp-72, Tyr-146, Thr-201, and His-312 contribute to the substrate site.

The protein belongs to the uroporphyrinogen decarboxylase family. As to quaternary structure, homodimer.

Its subcellular location is the cytoplasm. The enzyme catalyses uroporphyrinogen III + 4 H(+) = coproporphyrinogen III + 4 CO2. It participates in porphyrin-containing compound metabolism; protoporphyrin-IX biosynthesis; coproporphyrinogen-III from 5-aminolevulinate: step 4/4. Its function is as follows. Catalyzes the decarboxylation of four acetate groups of uroporphyrinogen-III to yield coproporphyrinogen-III. This is Uroporphyrinogen decarboxylase from Thermodesulfovibrio yellowstonii (strain ATCC 51303 / DSM 11347 / YP87).